The primary structure comprises 377 residues: uncharacterized protein (377 aa).

7 consecutive transmembrane segments (helical) span residues 21–41 (WLLA…LVLF), 66–86 (LVTF…FGLG), 163–183 (IGVL…GIVL), 197–217 (AILF…IAII), 236–256 (FYMG…YHIF), 292–312 (VNLI…FLIL), and 339–359 (IYFL…ELLF).

Its subcellular location is the cell membrane. This is an uncharacterized protein from Mycoplasma pneumoniae (strain ATCC 29342 / M129 / Subtype 1) (Mycoplasmoides pneumoniae).